A 305-amino-acid chain; its full sequence is Glutaminase (305 aa).

Substrate-binding residues include serine 61, asparagine 113, glutamate 158, asparagine 165, tyrosine 189, tyrosine 241, and valine 259.

It belongs to the glutaminase family. As to quaternary structure, homotetramer.

It catalyses the reaction L-glutamine + H2O = L-glutamate + NH4(+). This chain is Glutaminase, found in Clostridium botulinum (strain Kyoto / Type A2).